A 396-amino-acid polypeptide reads, in one-letter code: Protein PIN-LIKES 5 (396 aa).

Topologically, residues 1-5 (MGFWS) are lumenal. Residues 6 to 26 (LLEVASMPVIQVLFMSLVGAF) traverse the membrane as a helical segment. The Cytoplasmic segment spans residues 27–45 (MASDRCKLFPVEARNSMNK). A helical membrane pass occupies residues 46 to 66 (VVFVLFAPALMFANLAQTVTL). The Lumenal segment spans residues 67 to 73 (EDIISWW). Residues 74 to 94 (FMPVNMGLTFLIGGLLGWLVV) traverse the membrane as a helical segment. Residues 95–106 (KILKPPPYLEGL) are Cytoplasmic-facing. A helical transmembrane segment spans residues 107–127 (IVATCSAGNMGNLPIILVPAI). The Lumenal portion of the chain corresponds to 128–144 (CDEDKSPFGNRSVCRTV). The chain crosses the membrane as a helical span at residues 145–165 (GLSYASFSMALGGFYIWTYTF). The Cytoplasmic segment spans residues 166-229 (RLIKGSAMKV…WRKGVDFLHE (64 aa)). Residues 230–250 (ILEELLAPPTLGAIIGFIFGA) traverse the membrane as a helical segment. Residues 251–273 (VRWLRNLIIGDDAPLRIVQSTAK) lie on the Lumenal side of the membrane. Residues 274 to 294 (LLGDGTIPCMTIILGGNLIQG) traverse the membrane as a helical segment. Residues 295–312 (LRSSAVKPMVVLGIVCVR) lie on the Cytoplasmic side of the membrane. The helical transmembrane segment at 313–333 (YIAMPIIGIGIVLTAANLGFL) threads the bilayer. Residues 334 to 337 (PADP) lie on the Lumenal side of the membrane. A helical transmembrane segment spans residues 338–358 (LFQYVLMLQFTLPPAMNIGTM). Topologically, residues 359 to 370 (TQLYNVAQDECS) are cytoplasmic. A helical transmembrane segment spans residues 371 to 391 (VLMLWTYLVAILALTVWSTIF). The Lumenal segment spans residues 392–396 (LHLLV).

The protein belongs to the auxin efflux carrier (TC 2.A.69.2) family. In terms of tissue distribution, expressed in seedlings, cauline leaves and flowers.

The protein localises to the endoplasmic reticulum membrane. Its function is as follows. Involved in cellular auxin homeostasis by regulating auxin metabolism. Regulates intracellular auxin accumulation at the endoplasmic reticulum and thus auxin availability for nuclear auxin signaling. The sequence is that of Protein PIN-LIKES 5 from Arabidopsis thaliana (Mouse-ear cress).